The primary structure comprises 133 residues: Small ribosomal subunit protein uS8 (133 aa).

This sequence belongs to the universal ribosomal protein uS8 family. Part of the 30S ribosomal subunit. Contacts proteins S5 and S12.

One of the primary rRNA binding proteins, it binds directly to 16S rRNA central domain where it helps coordinate assembly of the platform of the 30S subunit. The polypeptide is Small ribosomal subunit protein uS8 (Prochlorococcus marinus (strain SARG / CCMP1375 / SS120)).